Reading from the N-terminus, the 1110-residue chain is Guanylate cyclase 2D (1110 aa).

Positions 1 to 66 are cleaved as a signal peptide; sequence MAGLQQGCHP…ADSLSLPAWA (66 aa). Residues 67–475 are Extracellular-facing; that stretch reads RETFTLGVLG…PNTLCIRGVQ (409 aa). Cys121 and Cys149 are joined by a disulfide. Residues Asn304 and Asn374 are each glycosylated (N-linked (GlcNAc...) asparagine). A helical transmembrane segment spans residues 476-500; that stretch reads PLGSLLTLTITCVLALVGGFLAYFI. Topologically, residues 501-1110 are cytoplasmic; it reads RLGLQQLRLL…TGFAKLARVG (610 aa). The disordered stretch occupies residues 529-556; the sequence is TPSRRRPHVDSGSESRSVVDGGSPQSVI. The region spanning 541–818 is the Protein kinase domain; the sequence is SESRSVVDGG…PSLDQIYTQF (278 aa). Residues 880-921 form an interaction with NCALD region; sequence MGTTVEPEYFDQVTIYFSDIVGFTTISALSEPIEVVGFLNDL. The 131-residue stretch at 893–1023 folds into the Guanylate cyclase domain; it reads TIYFSDIVGF…DTVNTASRME (131 aa).

Belongs to the adenylyl cyclase class-4/guanylyl cyclase family. In terms of assembly, interacts (via the catalytic domain) with NCALD. Specifically expressed in a subpopulation of olfactory sensory neurons. Expressed in the cilia of the olfactory epithelium.

The protein resides in the cell projection. It is found in the cilium membrane. It carries out the reaction GTP = 3',5'-cyclic GMP + diphosphate. With respect to regulation, activated by Ca(2+). Activated by NCALD in a Ca(2+)-dependent fashion. In terms of biological role, functions as an olfactory receptor activated by a urine odorant, uroguanylin. Activated as well by the volatile semiochemicals carbon disulfide (CS2) and carbon dioxide (CO2). Has guanylate cyclase activity upon binding of the ligand. Activation of GUCY2D neurons leads to the cGMP-dependent activation of the CNGA3 channels, membrane depolarization and an increase in action potential frequency. Signaling pathways activated by GUCY2D may trigger social behaviors such as acquisition of food preference. The polypeptide is Guanylate cyclase 2D (Gucy2d) (Rattus norvegicus (Rat)).